A 212-amino-acid polypeptide reads, in one-letter code: Nascent polypeptide-associated complex subunit alpha (212 aa).

Disordered regions lie at residues 1-54 (MSNP…SRNE) and 123-177 (QLAA…EDKD). The segment covering 22–38 (AEDEGSDSSDSEAEGEE) has biased composition (acidic residues). The NAC-A/B domain occupies 51 to 116 (SRNEKKARKS…AKIEDLNSQA (66 aa)). Residues 128–157 (ESHDHAGHDHSGHDHSHDHGKGKAVDTEEK) show a composition bias toward basic and acidic residues. Acidic residues predominate over residues 158–169 (KEEEEDDTEEVD). Residues 173–212 (LEDKDIELVMTQASVSRNKAVKALKENDNDIVNSIMALSI) form the UBA domain.

Belongs to the NAC-alpha family. In terms of assembly, part of the nascent polypeptide-associated complex (NAC), consisting of EGD2 and EGD1. NAC associates with ribosomes via EGD1.

Its subcellular location is the cytoplasm. It localises to the nucleus. Component of the nascent polypeptide-associated complex (NAC), a dynamic component of the ribosomal exit tunnel, protecting the emerging polypeptides from interaction with other cytoplasmic proteins to ensure appropriate nascent protein targeting. The NAC complex also promotes mitochondrial protein import by enhancing productive ribosome interactions with the outer mitochondrial membrane and blocks the inappropriate interaction of ribosomes translating non-secretory nascent polypeptides with translocation sites in the membrane of the endoplasmic reticulum. EGD2 may also be involved in transcription regulation. This Botryotinia fuckeliana (strain B05.10) (Noble rot fungus) protein is Nascent polypeptide-associated complex subunit alpha (egd2).